We begin with the raw amino-acid sequence, 451 residues long: REST corepressor 3 (451 aa).

Positions M1–V55 are disordered. One can recognise an ELM2 domain in the interval V55–T139. A Glycyl lysine isopeptide (Lys-Gly) (interchain with G-Cter in SUMO2) cross-link involves residue K76. One can recognise an SANT domain in the interval P140–S191. The segment at A204 to K275 is disordered. Residues S212 and S227 each carry the phosphoserine modification. A compositionally biased stretch (basic and acidic residues) spans E218–N240. Residue K249 forms a Glycyl lysine isopeptide (Lys-Gly) (interchain with G-Cter in SUMO2) linkage. Residues Q261–P273 are compositionally biased toward basic residues. A coiled-coil region spans residues A293–G329. A disordered region spans residues F333 to H451. A compositionally biased stretch (pro residues) spans P349 to T361. Low complexity predominate over residues R375–L384. R401 and R413 each carry asymmetric dimethylarginine. Over residues V431 to H451 the composition is skewed to polar residues.

It belongs to the CoREST family.

It is found in the nucleus. Functionally, may act as a component of a corepressor complex that represses transcription. In Mus musculus (Mouse), this protein is REST corepressor 3 (Rcor3).